A 338-amino-acid chain; its full sequence is Ribosomal RNA small subunit methyltransferase C (338 aa).

It belongs to the methyltransferase superfamily. RsmC family. In terms of assembly, monomer.

The protein resides in the cytoplasm. It catalyses the reaction guanosine(1207) in 16S rRNA + S-adenosyl-L-methionine = N(2)-methylguanosine(1207) in 16S rRNA + S-adenosyl-L-homocysteine + H(+). In terms of biological role, specifically methylates the guanine in position 1207 of 16S rRNA in the 30S particle. This Buchnera aphidicola subsp. Acyrthosiphon pisum (strain APS) (Acyrthosiphon pisum symbiotic bacterium) protein is Ribosomal RNA small subunit methyltransferase C.